Reading from the N-terminus, the 466-residue chain is Gamma-aminobutyric acid receptor subunit gamma-2 (466 aa).

The first 38 residues, 1–38 (MSSPNTWSTGSTVYSPVFSQKMTLWILLLLSLYPGFTS), serve as a signal peptide directing secretion. The Extracellular segment spans residues 39–274 (QKSDDDYEDY…FDLSRRMGYF (236 aa)). Asn-51 and Asn-128 each carry an N-linked (GlcNAc...) asparagine glycan. Cys-189 and Cys-203 are oxidised to a cystine. Residue Asn-246 is glycosylated (N-linked (GlcNAc...) asparagine). Residues 275-295 (TIQTYIPCTLIVVLSWVSFWI) traverse the membrane as a helical segment. Residues 296–301 (NKDAVP) lie on the Cytoplasmic side of the membrane. A helical transmembrane segment spans residues 302-321 (ARTSLGITTVLTMTTLSTIA). At 322-333 (RKSLPKVSYVTA) the chain is on the extracellular side. The helical transmembrane segment at 334–358 (MDLFVSVCFIFVFSALVEYGTLHYF) threads the bilayer. Residues 359-442 (VSNRKPSKDK…IHIRIAKMDS (84 aa)) lie on the Cytoplasmic side of the membrane. Residues 443–463 (YARIFFPTAFCLFNLVYWVSY) form a helical membrane-spanning segment. The Extracellular segment spans residues 464-466 (LYL).

The protein belongs to the ligand-gated ion channel (TC 1.A.9) family. Gamma-aminobutyric acid receptor (TC 1.A.9.5) subfamily. GABRG2 sub-subfamily. In terms of assembly, heteropentamer, formed by a combination of alpha (GABRA1-6), beta (GABRB1-3), gamma (GABRG1-3), delta (GABRD), epsilon (GABRE), rho (GABRR1-3), pi (GABRP) and theta (GABRQ) chains, each subunit exhibiting distinct physiological and pharmacological properties. Interacts with GABARAP. Interacts with KIF21B. Identified in a complex of 720 kDa composed of LHFPL4, NLGN2, GABRA1, GABRB2, GABRG2 and GABRB3. Interacts with LHFPL4. Interacts with SHISA7; interaction leads to the regulation of GABA(A) receptor trafficking, channel deactivation kinetics and pharmacology. Post-translationally, palmitoylated by ZDHHC3/GODZ; required for the accumulation of GABA(A) receptors at the postsynaptic membrane of inhibitory GABAergic synapses. Glycosylated. As to expression, expressed in brain (at protein level). Expressed in lungs, in alveolar epithelium.

It is found in the postsynaptic cell membrane. It localises to the cell membrane. The protein localises to the cell projection. Its subcellular location is the dendrite. The protein resides in the cytoplasmic vesicle membrane. It catalyses the reaction chloride(in) = chloride(out). With respect to regulation, allosterically activated by benzodiazepines. Activated by pentobarbital. Inhibited by the antagonist bicuculline. Inhibited by zinc ions. Potentiated by histamine. Gamma subunit of the heteropentameric ligand-gated chloride channel gated by gamma-aminobutyric acid (GABA), a major inhibitory neurotransmitter in the brain. GABA-gated chloride channels, also named GABA(A) receptors (GABAAR), consist of five subunits arranged around a central pore and contain GABA active binding site(s) located at the alpha and beta subunit interface(s). When activated by GABA, GABAARs selectively allow the flow of chloride anions across the cell membrane down their electrochemical gradient. Gamma-2/GABRG2-containing GABAARs are found at both synaptic and extrasynaptic sites. Chloride influx into the postsynaptic neuron following GABAAR opening decreases the neuron ability to generate a new action potential, thereby reducing nerve transmission. GABAARs containing alpha-1 and beta-2 or -3 subunits exhibit synaptogenic activity; the gamma-2 subunit being necessary but not sufficient to induce rapid synaptic contacts formation. Extrasynaptic gamma-2-containing receptors contribute to the tonic GABAergic inhibition. GABAARs function also as histamine receptor where histamine binds at the interface of two neighboring beta subunits and potentiates GABA response in a gamma-2 subunit-controlled manner. The chain is Gamma-aminobutyric acid receptor subunit gamma-2 from Rattus norvegicus (Rat).